The following is a 254-amino-acid chain: Phytolongin Phyl1.1 (254 aa).

The region spanning 12-113 (CVSRDNQILY…TAMIGSINVE (102 aa)) is the Longin domain. The disordered stretch occupies residues 138–173 (ELKSSNLGEQSEGSNSTKAPLLGRLSKQEKKKGKDH). Residues 145–155 (GEQSEGSNSTK) are compositionally biased toward polar residues. The helical; Anchor for type IV membrane protein transmembrane segment at 226–246 (IVLAIDAAICLTLFGIWLAIC) threads the bilayer.

Belongs to the synaptobrevin family.

Its subcellular location is the membrane. Non-SNARE longin protein involved in membrane-trafficking machinery. The sequence is that of Phytolongin Phyl1.1 from Arabidopsis thaliana (Mouse-ear cress).